The following is a 1124-amino-acid chain: Eukaryotic translation initiation factor 3 subunit A (1124 aa).

Residues 96 to 124 (LKMAEERTEQAQQQSSQATVDIDDLDNLA) are a coiled coil. In terms of domain architecture, PCI spans 317–498 (IQRMTTHVLI…ECVHFGTDLS (182 aa)). Composition is skewed to basic and acidic residues over residues 812-851 (EERR…RQLA) and 860-883 (EVER…ERRP). The disordered stretch occupies residues 812-1124 (EERRRIEEEL…EEGWTDVKHR (313 aa)). The segment covering 900-910 (PAAAAPANPAA) has biased composition (low complexity). Basic and acidic residues-rich tracts occupy residues 928-952 (PRER…EKDG), 960-990 (RGGD…DRGP), 1007-1048 (PRRD…RGGG), and 1063-1100 (DDNR…EARP).

This sequence belongs to the eIF-3 subunit A family. As to quaternary structure, component of the eukaryotic translation initiation factor 3 (eIF-3) complex.

The protein resides in the cytoplasm. In terms of biological role, RNA-binding component of the eukaryotic translation initiation factor 3 (eIF-3) complex, which is involved in protein synthesis of a specialized repertoire of mRNAs and, together with other initiation factors, stimulates binding of mRNA and methionyl-tRNAi to the 40S ribosome. The eIF-3 complex specifically targets and initiates translation of a subset of mRNAs involved in cell proliferation. This Anopheles gambiae (African malaria mosquito) protein is Eukaryotic translation initiation factor 3 subunit A.